The primary structure comprises 304 residues: Nod factor export ATP-binding protein I (304 aa).

The region spanning 6 to 236 is the ABC transporter domain; the sequence is IDFRNVEKRF…EIGCDVIEIY (231 aa). 38–45 serves as a coordination point for ATP; the sequence is GPNGAGKT.

Belongs to the ABC transporter superfamily. Lipooligosaccharide exporter (TC 3.A.1.102) family. As to quaternary structure, the complex is composed of two ATP-binding proteins (NodI) and two transmembrane proteins (NodJ).

It localises to the cell inner membrane. Part of the ABC transporter complex NodIJ involved in the export of the nodulation factors (Nod factors), the bacterial signal molecules that induce symbiosis and subsequent nodulation induction. Nod factors are LCO (lipo-chitin oligosaccharide), a modified beta-1,4-linked N-acetylglucosamine oligosaccharide. This subunit is responsible for energy coupling to the transport system. This is Nod factor export ATP-binding protein I from Burkholderia lata (strain ATCC 17760 / DSM 23089 / LMG 22485 / NCIMB 9086 / R18194 / 383).